Here is a 253-residue protein sequence, read N- to C-terminus: Triosephosphate isomerase (253 aa).

Residue N9 to K11 participates in substrate binding. Residue H97 is the Electrophile of the active site. E169 functions as the Proton acceptor in the catalytic mechanism. Substrate is bound by residues G175, S215, and G236–G237.

This sequence belongs to the triosephosphate isomerase family. In terms of assembly, homodimer.

It is found in the cytoplasm. It catalyses the reaction D-glyceraldehyde 3-phosphate = dihydroxyacetone phosphate. Its pathway is carbohydrate biosynthesis; gluconeogenesis. The protein operates within carbohydrate degradation; glycolysis; D-glyceraldehyde 3-phosphate from glycerone phosphate: step 1/1. Involved in the gluconeogenesis. Catalyzes stereospecifically the conversion of dihydroxyacetone phosphate (DHAP) to D-glyceraldehyde-3-phosphate (G3P). This Staphylococcus aureus (strain NCTC 8325 / PS 47) protein is Triosephosphate isomerase.